The chain runs to 318 residues: Tumor necrosis factor ligand superfamily member 11 (318 aa).

Topologically, residues Met1 to Arg47 are cytoplasmic. Residues Arg13–Pro41 are disordered. Over residues His31 to Pro41 the composition is skewed to pro residues. Residues Phe48–Phe68 traverse the membrane as a helical; Signal-anchor for type II membrane protein segment. At Leu69–Asp318 the chain is on the extracellular side. A THD domain is found at Pro165–Val314. N-linked (GlcNAc...) asparagine glycans are attached at residues Asn199 and Asn264.

Belongs to the tumor necrosis factor family. Homotrimer. Interacts with TNFRSF11A and TNFRSF11B. Interacts with FBN1 (via N-terminal domain) in a Ca(+2)-dependent manner. Interacts with TNFAIP6 (via both Link and CUB domains). Post-translationally, the soluble form derives from the membrane form by proteolytic processing. As to expression, highly expressed in thymus and bone tissues.

Its subcellular location is the cell membrane. It is found in the secreted. Functionally, cytokine that binds to TNFRSF11B/OPG and to TNFRSF11A/RANK. Osteoclast differentiation and activation factor. Augments the ability of dendritic cells to stimulate naive T-cell proliferation. May be an important regulator of interactions between T-cells and dendritic cells and may play a role in the regulation of the T-cell-dependent immune response. May also play an important role in enhanced bone-resorption in humoral hypercalcemia of malignancy. Induces osteoclastogenesis by activating multiple signaling pathways in osteoclast precursor cells, chief among which is induction of long lasting oscillations in the intracellular concentration of Ca (2+) resulting in the activation of NFATC1, which translocates to the nucleus and induces osteoclast-specific gene transcription to allow differentiation of osteoclasts. During osteoclast differentiation, in a TMEM64 and ATP2A2-dependent manner induces activation of CREB1 and mitochondrial ROS generation necessary for proper osteoclast generation. The polypeptide is Tumor necrosis factor ligand superfamily member 11 (Tnfsf11) (Rattus norvegicus (Rat)).